A 404-amino-acid chain; its full sequence is Growth/differentiation factor 6-A (404 aa).

The first 24 residues, 1–24 (MDALRAVAFYALFVFLWSLPCCQS), serve as a signal peptide directing secretion. Residues 25–284 (AALISQKRSK…LQFKARRRRR (260 aa)) constitute a propeptide that is removed on maturation. Asn-91 carries an N-linked (GlcNAc...) asparagine glycan. The tract at residues 263-304 (KSRGDDDEEESALQFKARRRRRTALNNRHGKRHGKKSKSRCS) is disordered. A compositionally biased stretch (basic residues) spans 278 to 304 (KARRRRRTALNNRHGKRHGKKSKSRCS). Intrachain disulfides connect Cys-303/Cys-369, Cys-332/Cys-401, and Cys-336/Cys-403.

Belongs to the TGF-beta family. In terms of assembly, homodimer; disulfide-linked. First expressed in late gastrula stage embryos (9.5 hours post fertilization (hpf)) in anterior neuroectoderm corresponding to the future dorsal part of the brain. Shortly after tailbud formation (11 hpf), expression expands to the entire neural region and is subsequently expressed in derivatives of the lateral neural plate and migrating neural crest cells, with the future midbrain and hindbrain showing strong expression. Also expressed weakly and transiently in the posterior embryo from 11.5 hpf to 15 hpf in the lateral mesoderm, and in ectoderm above the neural keel. At 14 hpf, expressed along the entire length of the embryo and starting around the 16-somite stage, expressed in the dorsal quadrant of the retina, representing the distal tip of the eye anlage. At this stage, also expressed in the hatching gland and the hypochord. At 24 hpf, expressed in the roof plate outlining the fourth brain ventricle, in the posterior hypochord, the primitive gut endoderm, the ventral tail mesenchyme, the dorsal part of the neural tube and the dorsal fin. Weakly expressed in the dorsal part of the posterior spinal cord and in blood cell precursors.

Its subcellular location is the secreted. Functionally, growth factor that controls proliferation and cellular differentiation in the retina. Plays a key role in regulating apoptosis during retinal development. Establishes dorsal-ventral positional information in the retina and controls the formation of the retinotectal map. Functions maternally in dorsal/ventral patterning to induce the expression of the zygotic bmp2b and bmp4 genes and ventralize embryos. Zygotic expression does not appear to regulate axis specification, but instead functions to establish the integrity of the axial vessels during embryonic development. May be involved in maintaining the identity of cells of the dorsal-most neural tube and of at least a subset of neural crest cells. This is Growth/differentiation factor 6-A (gdf6a) from Danio rerio (Zebrafish).